A 123-amino-acid chain; its full sequence is Fluoride-specific ion channel FluC (123 aa).

4 helical membrane-spanning segments follow: residues 7 to 27 (LLLIIGGGLGALARYYISGIL), 39 to 59 (LVNSIASFILGYLYGLLFFGF), 67 to 87 (IFLGTGFCGGLSTFSTFSYET), and 100 to 120 (FMNVVANVLVTITLVFLGFIL). Na(+) is bound by residues G75 and S78.

It belongs to the fluoride channel Fluc/FEX (TC 1.A.43) family.

The protein localises to the cell membrane. The enzyme catalyses fluoride(in) = fluoride(out). With respect to regulation, na(+) is not transported, but it plays an essential structural role and its presence is essential for fluoride channel function. Its function is as follows. Fluoride-specific ion channel. Important for reducing fluoride concentration in the cell, thus reducing its toxicity. This chain is Fluoride-specific ion channel FluC, found in Pyrococcus abyssi (strain GE5 / Orsay).